Consider the following 185-residue polypeptide: Kunitz-type serine protease inhibitor DrTI (185 aa).

2 disulfides stabilise this stretch: Cys44/Cys89 and Cys139/Cys147.

This sequence belongs to the protease inhibitor I3 (leguminous Kunitz-type inhibitor) family.

Its subcellular location is the secreted. Its function is as follows. Inhibits bovine trypsin and human plasma kallikrein. This is Kunitz-type serine protease inhibitor DrTI from Delonix regia (Royal poinciana).